Reading from the N-terminus, the 37-residue chain is Large ribosomal subunit protein bL36 (37 aa).

The protein belongs to the bacterial ribosomal protein bL36 family.

The chain is Large ribosomal subunit protein bL36 from Aromatoleum aromaticum (strain DSM 19018 / LMG 30748 / EbN1) (Azoarcus sp. (strain EbN1)).